Consider the following 266-residue polypeptide: Translation initiation factor 2 subunit alpha (266 aa).

The region spanning 12-83 (GDIVIGTVKD…RKGHIDLSLK (72 aa)) is the S1 motif domain.

The protein belongs to the eIF-2-alpha family. In terms of assembly, heterotrimer composed of an alpha, a beta and a gamma chain.

Its function is as follows. eIF-2 functions in the early steps of protein synthesis by forming a ternary complex with GTP and initiator tRNA. The chain is Translation initiation factor 2 subunit alpha (eif2a) from Methanocaldococcus jannaschii (strain ATCC 43067 / DSM 2661 / JAL-1 / JCM 10045 / NBRC 100440) (Methanococcus jannaschii).